We begin with the raw amino-acid sequence, 724 residues long: Probable ATP-dependent RNA helicase DDX4 (724 aa).

The segment covering 1–11 (MSGQEDWESEI) has biased composition (acidic residues). Disordered stretches follow at residues 1-25 (MSGQ…SNSE) and 37-241 (SSNN…QGPR). The span at 108-130 (SNGKQESGDFTNDDNRTIDDNRR) shows a compositional bias: basic and acidic residues. Positions 168 to 182 (EQSGFTSNDGFNNET) are enriched in polar residues. A Q motif motif is present at residues 286–314 (LTFEEANLCDSLAKNVCKSGYVKLTPIQK). The Helicase ATP-binding domain occupies 317-500 (IPIIVAGRDL…REILKPDYLF (184 aa)). Position 330 to 337 (330 to 337 (AQTGSGKT)) interacts with ATP. Residues 444-447 (DEAD) carry the DEAD box motif. One can recognise a Helicase C-terminal domain in the interval 512–675 (DVEQMVIEVD…EVPAWLEEVA (164 aa)). Residues 683 to 692 (AYNPRSNKFA) are compositionally biased toward polar residues. Residues 683–724 (AYNPRSNKFASTDDRKRGDSRGDYSTSGFSPSAAQAEEEDWG) are disordered. Residues 693 to 704 (STDDRKRGDSRG) show a composition bias toward basic and acidic residues. Over residues 705 to 715 (DYSTSGFSPSA) the composition is skewed to polar residues.

The protein belongs to the DEAD box helicase family. DDX4/VASA subfamily.

The protein resides in the cytoplasm. It catalyses the reaction ATP + H2O = ADP + phosphate + H(+). Its function is as follows. Probable ATP-dependent RNA helicase required during spermatogenesis to repress transposable elements and preventing their mobilization, which is essential for the germline integrity. Acts via the piRNA metabolic process, which mediates the repression of transposable elements during meiosis by forming complexes composed of piRNAs and Piwi proteins and governs the methylation and subsequent repression of transposons. Involved in the secondary piRNAs metabolic process, the production of piRNAs in fetal male germ cells through a ping-pong amplification cycle. The protein is Probable ATP-dependent RNA helicase DDX4 of Pelophylax lessonae (Pool frog).